Reading from the N-terminus, the 240-residue chain is MKTSGGSDAAKRRAGESAAETVTDGEVVGLGTGSTAAHAIRRLGDRVDSGLDIRGVATSFASRELAAECGIPLLDLDEAVGSDATGIDIAIDGADQVAVGEGESEVGPLIKGGGAAHAREKLVDASADRFLVVADPSKETPVLNRSVPVEVLPAGRSAVAEAVRAAGGEPTLRRAERKDGPVVTDNGNLVLDCAFGEIADPDALSTTLSTTPGVVEHGIFVGLADEVHVGTETGVRVARR.

Residues 1 to 23 form a disordered region; that stretch reads MKTSGGSDAAKRRAGESAAETVT. Residues 32-35, 92-95, and 111-114 contribute to the substrate site; these read TGST, DGAD, and KGGG. The Proton acceptor role is filled by Glu120. Lys138 serves as a coordination point for substrate.

This sequence belongs to the ribose 5-phosphate isomerase family. As to quaternary structure, homodimer.

It carries out the reaction aldehydo-D-ribose 5-phosphate = D-ribulose 5-phosphate. The protein operates within carbohydrate degradation; pentose phosphate pathway; D-ribose 5-phosphate from D-ribulose 5-phosphate (non-oxidative stage): step 1/1. Catalyzes the reversible conversion of ribose-5-phosphate to ribulose 5-phosphate. The protein is Ribose-5-phosphate isomerase A of Halorubrum lacusprofundi (strain ATCC 49239 / DSM 5036 / JCM 8891 / ACAM 34).